Consider the following 166-residue polypeptide: Phosphopantetheine adenylyltransferase (166 aa).

Substrate is bound at residue Thr9. Residues 9–10 (TF) and His17 contribute to the ATP site. Residues Lys41, Leu73, and Arg87 each contribute to the substrate site. ATP contacts are provided by residues 88 to 90 (GLR), Glu98, and 123 to 129 (YQFISGT).

It belongs to the bacterial CoaD family. As to quaternary structure, homohexamer. Mg(2+) serves as cofactor.

The protein resides in the cytoplasm. The enzyme catalyses (R)-4'-phosphopantetheine + ATP + H(+) = 3'-dephospho-CoA + diphosphate. Its pathway is cofactor biosynthesis; coenzyme A biosynthesis; CoA from (R)-pantothenate: step 4/5. Its function is as follows. Reversibly transfers an adenylyl group from ATP to 4'-phosphopantetheine, yielding dephospho-CoA (dPCoA) and pyrophosphate. This Burkholderia mallei (strain NCTC 10229) protein is Phosphopantetheine adenylyltransferase.